The primary structure comprises 197 residues: Chitin synthase 3 (197 aa).

It belongs to the chitin synthase family. Class III subfamily.

The protein localises to the cell membrane. It carries out the reaction [(1-&gt;4)-N-acetyl-beta-D-glucosaminyl](n) + UDP-N-acetyl-alpha-D-glucosamine = [(1-&gt;4)-N-acetyl-beta-D-glucosaminyl](n+1) + UDP + H(+). Functionally, polymerizes chitin, a structural polymer of the cell wall and septum, by transferring the sugar moiety of UDP-GlcNAc to the non-reducing end of the growing chitin polymer. The sequence is that of Chitin synthase 3 (CHS3) from Exophiala jeanselmei (Dematiaceous fungus).